The following is a 68-amino-acid chain: MEC1-mediated checkpoint protein HUG1 (68 aa).

Its subcellular location is the cytoplasm. It localises to the nucleus. Involved in the MEC1-mediated checkpoint response to DNA damage and replication arrest. This chain is MEC1-mediated checkpoint protein HUG1 (HUG1), found in Saccharomyces cerevisiae (strain ATCC 204508 / S288c) (Baker's yeast).